We begin with the raw amino-acid sequence, 227 residues long: Phosphoribosylformylglycinamidine synthase subunit PurQ (227 aa).

Residues 3–225 enclose the Glutamine amidotransferase type-1 domain; the sequence is FAVIVFPGSN…LKQWRETYVV (223 aa). C86 functions as the Nucleophile in the catalytic mechanism. Active-site residues include H194 and E196.

Part of the FGAM synthase complex composed of 1 PurL, 1 PurQ and 2 PurS subunits.

The protein resides in the cytoplasm. It catalyses the reaction N(2)-formyl-N(1)-(5-phospho-beta-D-ribosyl)glycinamide + L-glutamine + ATP + H2O = 2-formamido-N(1)-(5-O-phospho-beta-D-ribosyl)acetamidine + L-glutamate + ADP + phosphate + H(+). It carries out the reaction L-glutamine + H2O = L-glutamate + NH4(+). Its pathway is purine metabolism; IMP biosynthesis via de novo pathway; 5-amino-1-(5-phospho-D-ribosyl)imidazole from N(2)-formyl-N(1)-(5-phospho-D-ribosyl)glycinamide: step 1/2. Functionally, part of the phosphoribosylformylglycinamidine synthase complex involved in the purines biosynthetic pathway. Catalyzes the ATP-dependent conversion of formylglycinamide ribonucleotide (FGAR) and glutamine to yield formylglycinamidine ribonucleotide (FGAM) and glutamate. The FGAM synthase complex is composed of three subunits. PurQ produces an ammonia molecule by converting glutamine to glutamate. PurL transfers the ammonia molecule to FGAR to form FGAM in an ATP-dependent manner. PurS interacts with PurQ and PurL and is thought to assist in the transfer of the ammonia molecule from PurQ to PurL. The sequence is that of Phosphoribosylformylglycinamidine synthase subunit PurQ from Bacillus cereus (strain 03BB102).